The sequence spans 321 residues: Glutamyl-Q tRNA(Asp) synthetase (321 aa).

Residues 25-29 (RFAPS) and Glu61 contribute to the L-glutamate site. Residues 28 to 38 (PSPSGDLHFGS) carry the 'HIGH' region motif. Cys117, Cys119, Tyr131, and Cys135 together coordinate Zn(2+). Tyr188 and Arg206 together coordinate L-glutamate. Positions 244–248 (KLSKQ) match the 'KMSKS' region motif. Lys247 contacts ATP.

It belongs to the class-I aminoacyl-tRNA synthetase family. GluQ subfamily. The cofactor is Zn(2+).

Functionally, catalyzes the tRNA-independent activation of glutamate in presence of ATP and the subsequent transfer of glutamate onto a tRNA(Asp). Glutamate is transferred on the 2-amino-5-(4,5-dihydroxy-2-cyclopenten-1-yl) moiety of the queuosine in the wobble position of the QUC anticodon. The polypeptide is Glutamyl-Q tRNA(Asp) synthetase (Yersinia pestis).